The sequence spans 116 residues: Large ribosomal subunit protein bL17 (116 aa).

The protein belongs to the bacterial ribosomal protein bL17 family. In terms of assembly, part of the 50S ribosomal subunit. Contacts protein L32.

This Helicobacter pylori (strain J99 / ATCC 700824) (Campylobacter pylori J99) protein is Large ribosomal subunit protein bL17.